We begin with the raw amino-acid sequence, 429 residues long: Histidine--tRNA ligase (429 aa).

It belongs to the class-II aminoacyl-tRNA synthetase family. Homodimer.

Its subcellular location is the cytoplasm. It carries out the reaction tRNA(His) + L-histidine + ATP = L-histidyl-tRNA(His) + AMP + diphosphate + H(+). The chain is Histidine--tRNA ligase from Corynebacterium efficiens (strain DSM 44549 / YS-314 / AJ 12310 / JCM 11189 / NBRC 100395).